Reading from the N-terminus, the 479-residue chain is Aspartyl/glutamyl-tRNA(Asn/Gln) amidotransferase subunit B (479 aa).

The protein belongs to the GatB/GatE family. GatB subfamily. In terms of assembly, heterotrimer of A, B and C subunits.

The catalysed reaction is L-glutamyl-tRNA(Gln) + L-glutamine + ATP + H2O = L-glutaminyl-tRNA(Gln) + L-glutamate + ADP + phosphate + H(+). It catalyses the reaction L-aspartyl-tRNA(Asn) + L-glutamine + ATP + H2O = L-asparaginyl-tRNA(Asn) + L-glutamate + ADP + phosphate + 2 H(+). Functionally, allows the formation of correctly charged Asn-tRNA(Asn) or Gln-tRNA(Gln) through the transamidation of misacylated Asp-tRNA(Asn) or Glu-tRNA(Gln) in organisms which lack either or both of asparaginyl-tRNA or glutaminyl-tRNA synthetases. The reaction takes place in the presence of glutamine and ATP through an activated phospho-Asp-tRNA(Asn) or phospho-Glu-tRNA(Gln). The sequence is that of Aspartyl/glutamyl-tRNA(Asn/Gln) amidotransferase subunit B from Mesoplasma florum (strain ATCC 33453 / NBRC 100688 / NCTC 11704 / L1) (Acholeplasma florum).